A 296-amino-acid chain; its full sequence is Small ribosomal subunit biogenesis GTPase RsgA (296 aa).

Positions 63 to 224 constitute a CP-type G domain; the sequence is KNQLVRPMVA…IADTPGFSSY (162 aa). GTP-binding positions include 112 to 115 and 167 to 175; these read SKTD and GQTGAGKST. 4 residues coordinate Zn(2+): Cys-248, Cys-253, His-255, and Cys-261.

This sequence belongs to the TRAFAC class YlqF/YawG GTPase family. RsgA subfamily. As to quaternary structure, monomer. Associates with 30S ribosomal subunit, binds 16S rRNA. The cofactor is Zn(2+).

It localises to the cytoplasm. In terms of biological role, one of several proteins that assist in the late maturation steps of the functional core of the 30S ribosomal subunit. Helps release RbfA from mature subunits. May play a role in the assembly of ribosomal proteins into the subunit. Circularly permuted GTPase that catalyzes slow GTP hydrolysis, GTPase activity is stimulated by the 30S ribosomal subunit. The chain is Small ribosomal subunit biogenesis GTPase RsgA from Limosilactobacillus fermentum (strain NBRC 3956 / LMG 18251) (Lactobacillus fermentum).